The following is a 456-amino-acid chain: N(6)-adenosine-methyltransferase non-catalytic subunit METTL14 (456 aa).

The tract at residues 43–74 (EIAETRETSRASYDTSAAVSKRKLPEEGKADE) is disordered. Positions 65 to 74 (KLPEEGKADE) are enriched in basic and acidic residues. Interaction with METTL3 regions lie at residues 135–136 (RD) and 237–238 (SG). Positions 245-254 (RMCLRKWGFR) are positively charged region required for RNA-binding. Interaction with METTL3 stretches follow at residues 255–258 (RSED) and 278–287 (KAIFQRTKEH). The positively charged region required for RNA-binding stretch occupies residues 297–298 (HR). The interaction with METTL3 stretch occupies residues 308–312 (NVDID). The disordered stretch occupies residues 395–456 (LRPKTPPPKS…GPHRGVFAPR (62 aa)). Gly residues predominate over residues 410-421 (ASRGGGRGGASA). Positions 423 to 441 (RGERGRERNRGSFRGDRGN) are enriched in basic and acidic residues.

The protein belongs to the MT-A70-like family. As to quaternary structure, heterodimer; heterodimerizes with mettl3 to form an antiparallel heterodimer that constitutes an active methyltransferase. Component of the WMM complex, a N6-methyltransferase complex composed of a catalytic subcomplex, named MAC, and of an associated subcomplex, named MACOM. The MAC subcomplex is composed of mettl3 and mettl14.

The protein localises to the nucleus. The METTL3-METTL14 heterodimer forms a N6-methyltransferase complex that methylates adenosine residues at the N(6) position of some mRNAs and regulates the circadian clock, differentiation of embryonic stem cells and cortical neurogenesis. In the heterodimer formed with mettl3, mettl14 constitutes the RNA-binding scaffold that recognizes the substrate rather than the catalytic core. N6-methyladenosine (m6A), which takes place at the 5'-[AG]GAC-3' consensus sites of some mRNAs, plays a role in mRNA stability and processing. This chain is N(6)-adenosine-methyltransferase non-catalytic subunit METTL14 (mettl14), found in Xenopus laevis (African clawed frog).